A 379-amino-acid chain; its full sequence is MSKLDGFIEEHDRESNIDSGARLESTKPSPKVGSPAQRVRQNGVKSPILQTQATPAKPSEQEHPLKETPTRATAGGKMTRSNTLKRLSLIQPVISPETTPKEHRQQQATRNRSRSVVSVHSRSSSSASEQLADATKDVNALLQLLANKELELLETKHKIEELKKTLTQEEKALLRQTHELQDLKTQVGKALNSGIDEQIQQQSQSSHHSPNQRSLAVPTSHTPGNESRPAHAKKESVWTKPLSFLNQFDQLIQHELEKKLNWDDVASPEKTPGAESGTLSGRSASPASYNNGNSNNNNNNNSNRGRPNEDVLGNMSSSLWSFVSDVKTGLLGINEEEEEESAEAPAVASSGESNNQLRFVGSKNNSEVELKEYNASKRQ.

The span at 1 to 16 (MSKLDGFIEEHDRESN) shows a compositional bias: basic and acidic residues. Disordered stretches follow at residues 1 to 133 (MSKL…QLAD), 197 to 235 (EQIQ…AKKE), 263 to 313 (DDVA…DVLG), and 332 to 379 (GINE…SKRQ). Over residues 39–54 (VRQNGVKSPILQTQAT) the composition is skewed to polar residues. The span at 59–69 (SEQEHPLKETP) shows a compositional bias: basic and acidic residues. 2 stretches are compositionally biased toward low complexity: residues 114-128 (RSVV…SSAS) and 200-209 (QQQSQSSHHS). Residues 125–190 (SSASEQLADA…QDLKTQVGKA (66 aa)) adopt a coiled-coil conformation. The segment covering 211 to 225 (NQRSLAVPTSHTPGN) has biased composition (polar residues). 2 stretches are compositionally biased toward low complexity: residues 283–305 (SASP…SNRG) and 343–353 (EAPAVASSGES). Residues 354 to 365 (NNQLRFVGSKNN) are compositionally biased toward polar residues. The span at 366–379 (SEVELKEYNASKRQ) shows a compositional bias: basic and acidic residues.

This sequence belongs to the TDA11 family.

It localises to the cytoplasm. In Lachancea thermotolerans (strain ATCC 56472 / CBS 6340 / NRRL Y-8284) (Yeast), this protein is Topoisomerase I damage affected protein 11 (TDA11).